Reading from the N-terminus, the 120-residue chain is Histone H3-like centromeric protein cnp1 (120 aa).

The segment at Met-1–Thr-26 is disordered. The tract at residues Ile-14 to Ala-120 is H3-like.

It belongs to the histone H3 family. As to quaternary structure, component of centromeric nucleosomes, where DNA is wrapped around a histone octamer core. The octamer contains two molecules each of H2A, H2B, cnp1/CENPA and H4 assembled in one cnp1-H4 heterotetramer and two H2A-H2B heterodimers. Interacts with the inner kinetochore. Component of centromeric nucleosomes. Interacts with mis6. Interacts with sim4. Ubiquitinated. Is degraded through ubiquitin-mediated proteolysis when not protected by its association to the kinetochore.

The protein localises to the nucleus. The protein resides in the chromosome. It localises to the centromere. Histone H3-like nucleosomal protein that is specifically found in centromeric nucleosomes. Replaces conventional H3 in the nucleosome core of centromeric chromatin that serves as an assembly site for the inner kinetochore. Required for recruitment and assembly of kinetochore proteins, mitotic progression and chromosome segregation. May serve as an epigenetic mark that propagates centromere identity through replication and cell division. The sequence is that of Histone H3-like centromeric protein cnp1 (cnp1) from Schizosaccharomyces pombe (strain 972 / ATCC 24843) (Fission yeast).